The sequence spans 194 residues: 7-methyl-GTP pyrophosphatase (194 aa).

Asp-69 acts as the Proton acceptor in catalysis.

It belongs to the Maf family. YceF subfamily. It depends on a divalent metal cation as a cofactor.

Its subcellular location is the cytoplasm. The enzyme catalyses N(7)-methyl-GTP + H2O = N(7)-methyl-GMP + diphosphate + H(+). Functionally, nucleoside triphosphate pyrophosphatase that hydrolyzes 7-methyl-GTP (m(7)GTP). May have a dual role in cell division arrest and in preventing the incorporation of modified nucleotides into cellular nucleic acids. The polypeptide is 7-methyl-GTP pyrophosphatase (yceF1) (Salmonella paratyphi A (strain ATCC 9150 / SARB42)).